A 195-amino-acid polypeptide reads, in one-letter code: Imidazoleglycerol-phosphate dehydratase (195 aa).

This sequence belongs to the imidazoleglycerol-phosphate dehydratase family.

It localises to the cytoplasm. It catalyses the reaction D-erythro-1-(imidazol-4-yl)glycerol 3-phosphate = 3-(imidazol-4-yl)-2-oxopropyl phosphate + H2O. It functions in the pathway amino-acid biosynthesis; L-histidine biosynthesis; L-histidine from 5-phospho-alpha-D-ribose 1-diphosphate: step 6/9. This Beijerinckia indica subsp. indica (strain ATCC 9039 / DSM 1715 / NCIMB 8712) protein is Imidazoleglycerol-phosphate dehydratase.